Reading from the N-terminus, the 144-residue chain is MYRKMEVSLSKDLRKKYGIRSFPVIMGDVVKVISGSRKGEGGKVAEVDHASGLVVVEGITIARADGKQKGFGIQPEKLQITHLDLSRGDRFDKIKSLAARKNIVVEKPEPEPEPRKEETAEAQEAKEEAVAEEKTEVDDNDKQN.

Positions 102–144 (NIVVEKPEPEPEPRKEETAEAQEAKEEAVAEEKTEVDDNDKQN) are disordered. Over residues 103-134 (IVVEKPEPEPEPRKEETAEAQEAKEEAVAEEK) the composition is skewed to basic and acidic residues. Residues 135–144 (TEVDDNDKQN) show a composition bias toward acidic residues.

This sequence belongs to the universal ribosomal protein uL24 family. As to quaternary structure, part of the 50S ribosomal subunit.

Functionally, one of two assembly initiator proteins, it binds directly to the 5'-end of the 23S rRNA, where it nucleates assembly of the 50S subunit. Its function is as follows. Located at the polypeptide exit tunnel on the outside of the subunit. The chain is Large ribosomal subunit protein uL24 (rpl24) from Thermoplasma acidophilum (strain ATCC 25905 / DSM 1728 / JCM 9062 / NBRC 15155 / AMRC-C165).